We begin with the raw amino-acid sequence, 159 residues long: Transcription elongation factor GreA (159 aa).

Residues 46 to 73 (AEYHAAKEEQSFVEGRIKEIELKLSRMQ) are a coiled coil.

This sequence belongs to the GreA/GreB family.

Its function is as follows. Necessary for efficient RNA polymerase transcription elongation past template-encoded arresting sites. The arresting sites in DNA have the property of trapping a certain fraction of elongating RNA polymerases that pass through, resulting in locked ternary complexes. Cleavage of the nascent transcript by cleavage factors such as GreA or GreB allows the resumption of elongation from the new 3'terminus. GreA releases sequences of 2 to 3 nucleotides. The protein is Transcription elongation factor GreA of Vesicomyosocius okutanii subsp. Calyptogena okutanii (strain HA).